We begin with the raw amino-acid sequence, 425 residues long: Probable threonylcarbamoyladenosine tRNA methylthiotransferase (425 aa).

An MTTase N-terminal domain is found at 2 to 110; it reads VKIYIENYGC…IIQAVEYALR (109 aa). [4Fe-4S] cluster contacts are provided by cysteine 11, cysteine 47, cysteine 76, cysteine 148, cysteine 152, and cysteine 155. The Radical SAM core domain occupies 133–363; that stretch reads LSPRTVYFIV…HRIRLQISYE (231 aa). The TRAM domain occupies 366 to 425; it reads QKYIGKKVEVLIHGEGKKGNVDAVTMNYKHVILPFGNSGEFRIAEIKNATSTYLLGEVMS.

The protein belongs to the methylthiotransferase family. CDKAL1 subfamily. Requires [4Fe-4S] cluster as cofactor.

The catalysed reaction is N(6)-L-threonylcarbamoyladenosine(37) in tRNA + (sulfur carrier)-SH + AH2 + 2 S-adenosyl-L-methionine = 2-methylsulfanyl-N(6)-L-threonylcarbamoyladenosine(37) in tRNA + (sulfur carrier)-H + 5'-deoxyadenosine + L-methionine + A + S-adenosyl-L-homocysteine + 2 H(+). Catalyzes the methylthiolation of N6-threonylcarbamoyladenosine (t(6)A), leading to the formation of 2-methylthio-N6-threonylcarbamoyladenosine (ms(2)t(6)A) at position 37 in tRNAs that read codons beginning with adenine. This Pyrococcus abyssi (strain GE5 / Orsay) protein is Probable threonylcarbamoyladenosine tRNA methylthiotransferase.